The chain runs to 409 residues: Pleckstrin homology domain-containing family O member 1 (409 aa).

The disordered stretch occupies residues 1–20 (MMKKNNSTKRGPQDGNHQCA). Positions 21–132 (PPEKVGWVRK…WINALNSAIT (112 aa)) constitute a PH domain. The interval 133 to 193 (RAKNRVLDEV…MLTLDLIQEE (61 aa)) is interaction with capping proteins (CPs). An interaction with ATM, CKIP, IFP35 and NMI region spans residues 136–308 (NRVLDEVTVE…PHAPGQLSRI (173 aa)). Disordered stretches follow at residues 218–304 (LAGS…APGQ), 325–350 (EVQG…ESEQ), and 390–409 (TPDS…KSLM). A phosphoserine mark is found at serine 227 and serine 271. A negative regulator of AP-1 activity region spans residues 308 to 409 (IQDLVARKLE…QHSQYRKSLM (102 aa)). Residues 331 to 340 (DGKRKAKEPP) show a composition bias toward basic and acidic residues. Residue serine 342 is modified to Phosphoserine. Over residues 390 to 402 (TPDSHLRQTTQHS) the composition is skewed to polar residues.

Heterodimer or homodimer. Interacts with CK2 and actin capping subunits (capping protein CP-alpha and CP-beta). CKIP1 and CK2 together inhibit the activity of actin capping protein at the barbed ends of actin filaments. Interacts with ATM, IFP35, JUN, JUND, NMI and PI3K. Interacts with AKT1, AKT2 and AKT3 (each isozyme of PKB), PtdIns(3,5)P2, PtdIns(4,5)P2 and PtdIns(3,4,5)P2. In terms of processing, C-terminal fragments could be released during apoptosis via caspase-3-dependent cleavage.

It is found in the membrane. The protein localises to the nucleus. It localises to the cytoplasm. Functionally, plays a role in the regulation of the actin cytoskeleton through its interactions with actin capping protein (CP). May function to target CK2 to the plasma membrane thereby serving as an adapter to facilitate the phosphorylation of CP by protein kinase 2 (CK2). Appears to target ATM to the plasma membrane. Also implicated in PI3K-regulated muscle differentiation, the regulation of AP-1 activity (plasma membrane bound AP-1 regulator that translocates to the nucleus) and the promotion of apoptosis induced by tumor necrosis factor TNF. When bound to PKB, it inhibits it probably by decreasing PKB level of phosphorylation. This Bos taurus (Bovine) protein is Pleckstrin homology domain-containing family O member 1 (PLEKHO1).